Reading from the N-terminus, the 370-residue chain is 5-hydroxytryptamine receptor 5B (370 aa).

Residues 1 to 36 (MEVSNLSGATPGLAFPPGPESCSDSPSSGRSMGSTP) form a disordered region. Over 1–48 (MEVSNLSGATPGLAFPPGPESCSDSPSSGRSMGSTPGGLILPGREPPF) the chain is Extracellular. Residue N5 is glycosylated (N-linked (GlcNAc...) asparagine). The span at 20 to 36 (ESCSDSPSSGRSMGSTP) shows a compositional bias: low complexity. Residues 49 to 75 (SAFTVLVVTLLVLLIAATFLWNLLVLV) form a helical membrane-spanning segment. At 76 to 88 (TILRVRAFHRVPH) the chain is on the cytoplasmic side. Residues 89–115 (NLVASTAVSDVLVAVLVMPLSLVSELS) traverse the membrane as a helical segment. Over 116–127 (AGRRWQLGRSLC) the chain is Extracellular. C127 and C205 are disulfide-bonded. The chain crosses the membrane as a helical span at residues 128-150 (HVWISFDVLCCTASIWNVAAIAL). D134 contacts serotonin. The Cytoplasmic segment spans residues 151–168 (DRYWTITRHLQYTLRTRS). A helical transmembrane segment spans residues 169–189 (RASALMIAITWALSALIALAP). The Extracellular portion of the chain corresponds to 190 to 211 (LLFGWGEAYDARLQRCQVSQEP). The chain crosses the membrane as a helical span at residues 212-233 (SYAVFSTCGAFYLPLAVVLFVY). Residues 234–300 (WKIYKAAKFR…QKEKRAAMMV (67 aa)) lie on the Cytoplasmic side of the membrane. The chain crosses the membrane as a helical span at residues 301 to 325 (GILIGVFVLCWIPFFLTELISPLCA). The Extracellular segment spans residues 326 to 327 (CS). A helical transmembrane segment spans residues 328–352 (LPPIWKSIFLWLGYSNSFFNPLIYT). Over 353 to 370 (AFNKNYNNAFKSLFTKQR) the chain is Cytoplasmic.

Belongs to the G-protein coupled receptor 1 family. Expressed predominantly in the central nervous system; in the hippocampus, habenula, and the doral raphe.

The protein localises to the cell membrane. G-protein coupled receptor for 5-hydroxytryptamine (serotonin), a biogenic hormone that functions as a neurotransmitter, a hormone and a mitogen. Also functions as a receptor for ergot alkaloid derivatives and other psychoactive substances. Ligand binding causes a conformation change that triggers signaling via guanine nucleotide-binding proteins (G proteins) and modulates the activity of downstream effectors. Htr5b is coupled to G(i)/G(o) G alpha proteins and mediates inhibitory neurotransmission: signaling inhibits adenylate cyclase activity and activates a phosphatidylinositol-calcium second messenger system that regulates the release of Ca(2+) ions from intracellular stores. The polypeptide is 5-hydroxytryptamine receptor 5B (Mus musculus (Mouse)).